Consider the following 331-residue polypeptide: Tryptophan--tRNA ligase 1 (331 aa).

ATP is bound by residues Lys9 to Thr11 and Gly17 to Asn18. Residues Pro10–Asn18 carry the 'HIGH' region motif. Asp137 serves as a coordination point for L-tryptophan. ATP is bound by residues Gly149–Asp151, Val188, and Lys197–Ser201. The 'KMSKS' region motif lies at Lys197 to Ser201.

This sequence belongs to the class-I aminoacyl-tRNA synthetase family. In terms of assembly, homodimer.

The protein resides in the cytoplasm. The catalysed reaction is tRNA(Trp) + L-tryptophan + ATP = L-tryptophyl-tRNA(Trp) + AMP + diphosphate + H(+). In terms of biological role, catalyzes the attachment of tryptophan to tRNA(Trp). The polypeptide is Tryptophan--tRNA ligase 1 (Streptomyces avermitilis (strain ATCC 31267 / DSM 46492 / JCM 5070 / NBRC 14893 / NCIMB 12804 / NRRL 8165 / MA-4680)).